The sequence spans 423 residues: Imidazolonepropionase (423 aa).

Residues H78 and H80 each coordinate Fe(3+). Zn(2+) is bound by residues H78 and H80. Residues R87, Y150, and H183 each contribute to the 4-imidazolone-5-propanoate site. N-formimidoyl-L-glutamate is bound at residue Y150. Residue H247 coordinates Fe(3+). H247 provides a ligand contact to Zn(2+). 4-imidazolone-5-propanoate is bound at residue E250. D322 contributes to the Fe(3+) binding site. Position 322 (D322) interacts with Zn(2+). The N-formimidoyl-L-glutamate site is built by N324 and G326. 4-imidazolone-5-propanoate is bound at residue S327.

It belongs to the metallo-dependent hydrolases superfamily. HutI family. The cofactor is Zn(2+). It depends on Fe(3+) as a cofactor.

The protein resides in the cytoplasm. It carries out the reaction 4-imidazolone-5-propanoate + H2O = N-formimidoyl-L-glutamate. It participates in amino-acid degradation; L-histidine degradation into L-glutamate; N-formimidoyl-L-glutamate from L-histidine: step 3/3. Functionally, catalyzes the hydrolytic cleavage of the carbon-nitrogen bond in imidazolone-5-propanoate to yield N-formimidoyl-L-glutamate. It is the third step in the universal histidine degradation pathway. The sequence is that of Imidazolonepropionase from Bacillus cereus (strain ATCC 14579 / DSM 31 / CCUG 7414 / JCM 2152 / NBRC 15305 / NCIMB 9373 / NCTC 2599 / NRRL B-3711).